The following is a 393-amino-acid chain: Putative serpin-Z6A (393 aa).

An RCL region spans residues 336-360 (GTEAAAATAVLMEGAARYAPPPPPR).

Belongs to the serpin family.

Probable serine protease inhibitor. This chain is Putative serpin-Z6A, found in Oryza sativa subsp. japonica (Rice).